Reading from the N-terminus, the 192-residue chain is UPF0312 protein Spro_1887 (192 aa).

The N-terminal stretch at 1 to 23 (MLKKTVLGLTAGAMLLSAGSALA) is a signal peptide.

It belongs to the UPF0312 family. Type 1 subfamily.

The protein resides in the periplasm. The polypeptide is UPF0312 protein Spro_1887 (Serratia proteamaculans (strain 568)).